The sequence spans 261 residues: Auxin-responsive protein IAA10 (261 aa).

A disordered region spans residues 1-43 (MNGLQEVCSSSGSVMIGLPAEEDENAAHSSEDSSCPDESVSET). An EAR-like (transcriptional repression) motif is present at residues 45–49 (LDLAL). The segment at 62-90 (LSSSSSSLTRESGTKRSADSSPAAASNAT) is disordered. The segment covering 80-89 (DSSPAAASNA) has biased composition (low complexity). Residues 151-253 (SMLVKVTMDG…SVTRLRIMKT (103 aa)) form the PB1 domain.

This sequence belongs to the Aux/IAA family. As to quaternary structure, homodimers and heterodimers. As to expression, preferentially expressed in vegetative organs.

It localises to the nucleus. Functionally, aux/IAA proteins are short-lived transcriptional factors that function as repressors of early auxin response genes at low auxin concentrations. Repression is thought to result from the interaction with auxin response factors (ARFs), proteins that bind to the auxin-responsive promoter element (AuxRE). Formation of heterodimers with ARF proteins may alter their ability to modulate early auxin response genes expression. This Arabidopsis thaliana (Mouse-ear cress) protein is Auxin-responsive protein IAA10 (IAA10).